A 150-amino-acid polypeptide reads, in one-letter code: MNTCIQLLILCLVTVINSENLTDISTETTIENEIENATETELSEAIEKETENVTETELPDTVKTEIQFETQNLPHNPKQKYCRTEGQYCSRTYFHRCCGNLVCQLHGFFNGTCVQCLAERKFCIWSSECCSKRCRLFRCRKNPYVQVIPY.

An N-terminal signal peptide occupies residues 1–18; it reads MNTCIQLLILCLVTVINS. Asparagine 20, asparagine 36, asparagine 52, and asparagine 110 each carry an N-linked (GlcNAc...) asparagine glycan. Disulfide bonds link cysteine 116–cysteine 130, cysteine 123–cysteine 134, and cysteine 129–cysteine 139.

It belongs to the UPF0506 family.

Its subcellular location is the secreted. This chain is UPF0506 protein SJCHGC03144, found in Schistosoma japonicum (Blood fluke).